A 624-amino-acid polypeptide reads, in one-letter code: Interleukin-1 receptor-associated kinase-like 2 (624 aa).

Residues 13-94 (LDDLCRNIDT…RAAQIVLSWK (82 aa)) enclose the Death domain. The region spanning 210–475 (FDQSHRISEG…LPEACAETWA (266 aa)) is the Protein kinase domain. Residues 216–224 (ISEGTFADI), Lys237, and 337–340 (KSAN) contribute to the ATP site. Disordered regions lie at residues 508–536 (SLPW…NSSL) and 549–593 (RVSS…ETSW). Positions 558–577 (GNGTAQPSTSGRQEADSSSE) are enriched in polar residues.

The protein belongs to the protein kinase superfamily. TKL Ser/Thr protein kinase family. Pelle subfamily. As to quaternary structure, interacts with MYD88. IL-1 stimulation leads to the formation of a signaling complex which dissociates from the IL-1 receptor following the binding of PELI1.

Functionally, binds to the IL-1 type I receptor following IL-1 engagement, triggering intracellular signaling cascades leading to transcriptional up-regulation and mRNA stabilization. This is Interleukin-1 receptor-associated kinase-like 2 (Irak2) from Rattus norvegicus (Rat).